We begin with the raw amino-acid sequence, 310 residues long: Putrescinyltransferase (310 aa).

The protein belongs to the thymidine aminotransferase family.

It carries out the reaction 5-phosphomethyl-dUMP in DNA + putrescine = 5-N(alpha)-putrescinyl-dTMP in DNA + phosphate. In terms of biological role, transfers putrescine to 5-phosphomethyl-2'-deoxyuridine (5-PmdU) to produce 5-Nalpha-putrescinylthymidine (Nalpha-PutT) as a step in the pathway leading to thymidine hypermodifications in the viral genome. As a final result of the pathway of hypermodification, Nalpha-PutT substitutes for about 50% of thymidines in the viral DNA. These modifications probably prevent degradation of viral genome by the host restriction-modification antiviral defense system. This chain is Putrescinyltransferase, found in Delftia phage PhiW-14 (Deftia acidovorans bacteriophage phiW-14).